A 274-amino-acid polypeptide reads, in one-letter code: Diaminopimelate epimerase (274 aa).

Asparagine 11, glutamine 44, and asparagine 64 together coordinate substrate. Catalysis depends on cysteine 73, which acts as the Proton donor. Substrate contacts are provided by residues glycine 74–asparagine 75, asparagine 157, asparagine 190, and glutamate 208–arginine 209. The active-site Proton acceptor is the cysteine 217. Residue glycine 218–serine 219 participates in substrate binding.

The protein belongs to the diaminopimelate epimerase family. As to quaternary structure, homodimer.

The protein localises to the cytoplasm. The catalysed reaction is (2S,6S)-2,6-diaminopimelate = meso-2,6-diaminopimelate. It functions in the pathway amino-acid biosynthesis; L-lysine biosynthesis via DAP pathway; DL-2,6-diaminopimelate from LL-2,6-diaminopimelate: step 1/1. Functionally, catalyzes the stereoinversion of LL-2,6-diaminopimelate (L,L-DAP) to meso-diaminopimelate (meso-DAP), a precursor of L-lysine and an essential component of the bacterial peptidoglycan. The chain is Diaminopimelate epimerase from Shigella boydii serotype 18 (strain CDC 3083-94 / BS512).